We begin with the raw amino-acid sequence, 818 residues long: Nibrin (818 aa).

An FHA domain is found at 22–70 (YVVGRKNCEILLTNDQSISRVHAVLTVTEQAVTLKDSSKYGTFVNGEKL). BRCT domains follow at residues 91–168 (SKFS…SALS) and 211–301 (GKTF…LAAI). 3 disordered regions span residues 372–716 (AVGE…DLPR), 729–757 (NNSS…KKNV), and 793–818 (EEKL…AKKR). Positions 379–405 (KTNPTQKASTTNKPLSLGQEPSSTRIV) are enriched in polar residues. Positions 409–419 (VMSSESFSVVE) are enriched in low complexity. Over residues 444–469 (APSSGNTTLKHSPQKQTALTSFFQPS) the composition is skewed to polar residues. Residues 470 to 475 (SKKRPR) carry the Nuclear localization signal motif. Polar residues predominate over residues 515–530 (EETSLGQACGTGQNSS). Acidic residues predominate over residues 549–571 (TAADDLEMSLEELEFLMSDEMDE). A compositionally biased stretch (polar residues) spans 586 to 602 (GLTSKINSEQLSNQQEV). Over residues 603 to 612 (TESKGRKGEK) the composition is skewed to basic and acidic residues. Low complexity predominate over residues 613–625 (NQQSSSSNIQSMQ). Polar residues-rich tracts occupy residues 633-644 (VTNQDTQTQSKR) and 653-662 (SSANKGPSKN). The span at 663–675 (KTPELEEVKKEEV) shows a compositional bias: basic and acidic residues. 2 stretches are compositionally biased toward polar residues: residues 678 to 692 (VVNS…QTSE) and 699 to 708 (MQASTSNSGP). Positions 793 to 808 (EEKLNEREETLGDDLF) are enriched in basic and acidic residues. The FxF/Y motif motif lies at 804-813 (GDDLFRYNPR).

Belongs to the Nibrin family. In terms of assembly, component of the MRN complex composed of two heterodimers rad50 and mre11 associated with a single nbn.

The protein resides in the nucleus. Its subcellular location is the chromosome. It is found in the PML body. The protein localises to the telomere. Its function is as follows. Component of the MRN complex, which plays a central role in double-strand break (DSB) repair, DNA recombination, maintenance of telomere integrity and meiosis. The MRN complex is involved in the repair of DNA double-strand breaks (DSBs) via homologous recombination (HR), an error-free mechanism which primarily occurs during S and G2 phases. The complex (1) mediates the end resection of damaged DNA, which generates proper single-stranded DNA, a key initial steps in HR, and is (2) required for the recruitment of other repair factors and efficient activation of ATM and ATR upon DNA damage. The MRN complex possesses single-strand endonuclease activity and double-strand-specific 3'-5' exonuclease activity, which are provided by MRE11, to initiate end resection, which is required for single-strand invasion and recombination. Within the MRN complex, nbn acts as a protein-protein adapter, which specifically recognizes and binds phosphorylated proteins, promoting their recruitment to DNA damage sites. Recruits mre11 and rad50 components of the MRN complex to DSBs in response to DNA damage. Promotes the recruitment of PI3/PI4-kinase family members atm, atr, and probably DNA-PKcs to the DNA damage sites, activating their functions. Mediates the recruitment of phosphorylated rbbp8/CtIP to DSBs, leading to cooperation between the MRN complex and rbbp8/CtIP to initiate end resection. The MRN complex and rbbp8/CtIP are also required for chromosome alignment during metaphase. The polypeptide is Nibrin (nbn) (Danio rerio (Zebrafish)).